A 123-amino-acid polypeptide reads, in one-letter code: Large ribosomal subunit protein bL12 (123 aa).

It belongs to the bacterial ribosomal protein bL12 family. In terms of assembly, homodimer. Part of the ribosomal stalk of the 50S ribosomal subunit. Forms a multimeric L10(L12)X complex, where L10 forms an elongated spine to which 2 to 4 L12 dimers bind in a sequential fashion. Binds GTP-bound translation factors.

In terms of biological role, forms part of the ribosomal stalk which helps the ribosome interact with GTP-bound translation factors. Is thus essential for accurate translation. The sequence is that of Large ribosomal subunit protein bL12 from Roseobacter denitrificans (strain ATCC 33942 / OCh 114) (Erythrobacter sp. (strain OCh 114)).